Consider the following 553-residue polypeptide: MANKNVLSEMDDLMAELGLVETTATPTSDQIKQPQQETAPTYLTYKDPNVSTGPGGDFRNLNDNNGGISRGPGLMSTGPGLVSTGPGLMSTGPGLMSKGPGLPNNSINNNISNNNGGGISSGPGLSFGVSSGVSSGVSSGVSSGVSSGVTLVAQNHLARQPSPPLNSQQQQQQQLPTYLDGVGTLQPISLAATTPDGRVVKANGPICGACGDMIIGVCTNALGRSYHPEHFVCTYCKLPFSGSFIEHEEKLYCENDYLELFSPRCFACIKPIEDTCINALGNRYHPECFSCSGCGDKLRGKPYKEEDGEVYCNTCKIARQKRLAAKSEICSKCKLPITGEYIILQGQPVHSEHYRCEECGCEFNVGKTCHEYEGRLYCYEDYQKQILNICGACSKPIVGRSITALGKVWHPEHFTCTTCQVPFAGSAFREHAGKPYCESHYHQFFGRQCFKCSKPVVDTGVEVFGKIYHREHFTCTGCECVLGKEIMEWDGKPLCFKCFDALPKEVRKRIKEKKAGDKKAEAYREKLAKKEAKELKKERERAAKEKEKESKAK.

The disordered stretch occupies residues 43–115 (LTYKDPNVST…SINNNISNNN (73 aa)). Over residues 99 to 114 (GPGLPNNSINNNISNN) the composition is skewed to low complexity. LIM zinc-binding domains lie at 205–262 (PICG…ELFS), 263–322 (PRCF…RQKR), 328–387 (EICS…KQIL), 388–447 (NICG…FFGR), and 448–505 (QCFK…LPKE). Positions 534–553 (ELKKERERAAKEKEKESKAK) are disordered.

The protein localises to the cytoplasm. The protein resides in the cell cortex. It localises to the cytoskeleton. Its function is as follows. Regulates and controls rearrangements of the actin cytoskeleton. Required for tip formation, morphogenesis, cell adhesion and motility, chemotaxis and aggregates formation. May function downstream of paxB. This is LIM domain-containing protein B (limB) from Dictyostelium discoideum (Social amoeba).